Reading from the N-terminus, the 165-residue chain is Ribosome maturation factor RimM (165 aa).

A PRC barrel domain is found at 89-161 (EADTHYVVDL…KIVIKPVRQW (73 aa)).

It belongs to the RimM family. As to quaternary structure, binds ribosomal protein uS19.

The protein resides in the cytoplasm. Its function is as follows. An accessory protein needed during the final step in the assembly of 30S ribosomal subunit, possibly for assembly of the head region. Essential for efficient processing of 16S rRNA. May be needed both before and after RbfA during the maturation of 16S rRNA. It has affinity for free ribosomal 30S subunits but not for 70S ribosomes. The polypeptide is Ribosome maturation factor RimM (Clostridium botulinum (strain Eklund 17B / Type B)).